The following is a 115-amino-acid chain: U31-theraphotoxin-Cg1b (115 aa).

The signal sequence occupies residues 1 to 18; sequence MKLCVIIIASLMVASVSG. Residues 19–51 constitute a propeptide that is removed on maturation; the sequence is RLRKIKGTELDKKMLLEKLGHGMDIRFEETPRE. 4 cysteine pairs are disulfide-bonded: Cys52-Cys67, Cys60-Cys73, Cys64-Cys113, and Cys66-Cys86.

The protein belongs to the neurotoxin 03 (Tx2) family. 02 subfamily. In terms of tissue distribution, expressed by the venom gland.

It localises to the secreted. Its function is as follows. Probable ion channel inhibitor. The sequence is that of U31-theraphotoxin-Cg1b from Chilobrachys guangxiensis (Chinese earth tiger tarantula).